A 437-amino-acid polypeptide reads, in one-letter code: Repulsive guidance molecule B (437 aa).

Residues 1–45 form the signal peptide; that stretch reads MGLRAAPSSAAAAAAEVEQRRSPGLCPPPLELLLLLLFSLGLLHA. The N-linked (GlcNAc...) asparagine glycan is linked to Asn120. Positions 121-133 are enriched in polar residues; that stretch reads CSKDGPTSSTNPE. The tract at residues 121–153 is disordered; that stretch reads CSKDGPTSSTNPEVTHDPCNYHSHAGAREHRRG. Cystine bridges form between Cys139–Cys226 and Cys163–Cys312. An N-linked (GlcNAc...) asparagine glycan is attached at Asn383. The GPI-anchor amidated asparagine moiety is linked to residue Asn413. A propeptide spans 414–437 (removed in mature form); that stretch reads GTPRGGSDLSVSLGLTCLILIVFL.

This sequence belongs to the repulsive guidance molecule (RGM) family. As to quaternary structure, homooligomer. Interacts with DRGX. Interacts with BMP2 and BMP4. Interacts with the BMP type I receptors ACVR1, BMPR1A and BMPR1B and with the BMP type II receptor ACVR2B. The functional complex with its receptor NEO1/neogenin appears to be a heterotetramer with a 2:2 stoichiometry, RGM molecules acting as staples that bring two NEO1 receptors together without interacting themselves, this arrangement leads to activation of downstream signaling via RhoA. In terms of processing, GPI-anchored. Autocatalytically cleaved at low pH; the two chains remain linked via two disulfide bonds.

It is found in the cell membrane. The protein resides in the membrane raft. In terms of biological role, member of the repulsive guidance molecule (RGM) family that contributes to the patterning of the developing nervous system. Acts as a bone morphogenetic protein (BMP) coreceptor that potentiates BMP signaling. Promotes neuronal adhesion. May inhibit neurite outgrowth. The sequence is that of Repulsive guidance molecule B from Homo sapiens (Human).